The chain runs to 161 residues: Nucleotide-binding protein Swoo_3646 (161 aa).

Belongs to the YajQ family.

Nucleotide-binding protein. The protein is Nucleotide-binding protein Swoo_3646 of Shewanella woodyi (strain ATCC 51908 / MS32).